A 228-amino-acid chain; its full sequence is Ribose-5-phosphate isomerase A (228 aa).

Substrate contacts are provided by residues 32–35 (TGST), 85–88 (DGAD), and 98–101 (KGGG). Glu-107 functions as the Proton acceptor in the catalytic mechanism. Lys-125 is a binding site for substrate.

Belongs to the ribose 5-phosphate isomerase family. In terms of assembly, homodimer.

It catalyses the reaction aldehydo-D-ribose 5-phosphate = D-ribulose 5-phosphate. It functions in the pathway carbohydrate degradation; pentose phosphate pathway; D-ribose 5-phosphate from D-ribulose 5-phosphate (non-oxidative stage): step 1/1. In terms of biological role, catalyzes the reversible conversion of ribose-5-phosphate to ribulose 5-phosphate. The protein is Ribose-5-phosphate isomerase A of Ralstonia nicotianae (strain ATCC BAA-1114 / GMI1000) (Ralstonia solanacearum).